The following is a 309-amino-acid chain: MTATDELTHNAGRYELSHLRALEAEAIHIIREVAAEFERPVLLFSGGKDSIVMLHLAVKAFRPGRLPFPVMHVDTGHNFDEVLQARDELVAETGVRLVVAKVQDDIDAGRVVETIPSRNPMQTFTLLRAIRENKFDAAFGGARRDEEKARAKERVFSFRDEFGQWDPKNQRPELWNLYNGRHRKGEHIRAFPLSNWTEFDIWSYIGAEQIKLPSIYYAHERKVFERDGMLLAVHKYLQPRKDEPIIEKTVRFRTVGDVTCTGCVESTAATVSEVIAETAISRLTERGATRADDRISEAGMEDRKREGYF.

This sequence belongs to the PAPS reductase family. CysD subfamily. Heterodimer composed of CysD, the smaller subunit, and CysN.

The catalysed reaction is sulfate + ATP + H(+) = adenosine 5'-phosphosulfate + diphosphate. The protein operates within sulfur metabolism; hydrogen sulfide biosynthesis; sulfite from sulfate: step 1/3. In terms of biological role, with CysN forms the ATP sulfurylase (ATPS) that catalyzes the adenylation of sulfate producing adenosine 5'-phosphosulfate (APS) and diphosphate, the first enzymatic step in sulfur assimilation pathway. APS synthesis involves the formation of a high-energy phosphoric-sulfuric acid anhydride bond driven by GTP hydrolysis by CysN coupled to ATP hydrolysis by CysD. This Mycolicibacterium gilvum (strain PYR-GCK) (Mycobacterium gilvum (strain PYR-GCK)) protein is Sulfate adenylyltransferase subunit 2.